Reading from the N-terminus, the 186-residue chain is Probable GTP-binding protein EngB (186 aa).

Residues 18–186 (DKKEICFIGR…LKKLIGSVIL (169 aa)) enclose the EngB-type G domain. GTP contacts are provided by residues 26–33 (GRSNVGKS), 52–56 (GRTQL), 69–72 (DLPG), 135–138 (NKAD), and 166–168 (VSA). Residues Ser33 and Thr54 each coordinate Mg(2+).

It belongs to the TRAFAC class TrmE-Era-EngA-EngB-Septin-like GTPase superfamily. EngB GTPase family. Mg(2+) is required as a cofactor.

Its function is as follows. Necessary for normal cell division and for the maintenance of normal septation. The protein is Probable GTP-binding protein EngB of Malacoplasma penetrans (strain HF-2) (Mycoplasma penetrans).